The sequence spans 129 residues: S-adenosylmethionine decarboxylase proenzyme (129 aa).

Serine 63 functions as the Schiff-base intermediate with substrate; via pyruvic acid in the catalytic mechanism. The residue at position 63 (serine 63) is a Pyruvic acid (Ser); by autocatalysis. Catalysis depends on histidine 68, which acts as the Proton acceptor; for processing activity. Cysteine 83 serves as the catalytic Proton donor; for catalytic activity.

Belongs to the prokaryotic AdoMetDC family. Type 1 subfamily. Heterotetramer of two alpha and two beta chains arranged as a dimer of alpha/beta heterodimers. Pyruvate serves as cofactor. In terms of processing, is synthesized initially as an inactive proenzyme. Formation of the active enzyme involves a self-maturation process in which the active site pyruvoyl group is generated from an internal serine residue via an autocatalytic post-translational modification. Two non-identical subunits are generated from the proenzyme in this reaction, and the pyruvate is formed at the N-terminus of the alpha chain, which is derived from the carboxyl end of the proenzyme. The post-translation cleavage follows an unusual pathway, termed non-hydrolytic serinolysis, in which the side chain hydroxyl group of the serine supplies its oxygen atom to form the C-terminus of the beta chain, while the remainder of the serine residue undergoes an oxidative deamination to produce ammonia and the pyruvoyl group blocking the N-terminus of the alpha chain.

It carries out the reaction S-adenosyl-L-methionine + H(+) = S-adenosyl 3-(methylsulfanyl)propylamine + CO2. The protein operates within amine and polyamine biosynthesis; S-adenosylmethioninamine biosynthesis; S-adenosylmethioninamine from S-adenosyl-L-methionine: step 1/1. In terms of biological role, catalyzes the decarboxylation of S-adenosylmethionine to S-adenosylmethioninamine (dcAdoMet), the propylamine donor required for the synthesis of the polyamines spermine and spermidine from the diamine putrescine. This Shouchella clausii (strain KSM-K16) (Alkalihalobacillus clausii) protein is S-adenosylmethionine decarboxylase proenzyme.